We begin with the raw amino-acid sequence, 113 residues long: Large ribosomal subunit protein P2 (113 aa).

The interval 62–113 is disordered; the sequence is LASVPSGGAGGAAASGGAAAAGGSAQAEAAPEAAKEEEKEESDEDMGFGLFD. The span at 76 to 93 shows a compositional bias: low complexity; it reads SGGAAAAGGSAQAEAAPE. A Phosphoserine modification is found at Ser-103.

Belongs to the eukaryotic ribosomal protein P1/P2 family. As to quaternary structure, P1 and P2 exist as dimers at the large ribosomal subunit.

Functionally, plays an important role in the elongation step of protein synthesis. The chain is Large ribosomal subunit protein P2 (ALTA5) from Alternaria alternata (Alternaria rot fungus).